The following is a 300-amino-acid chain: Cation-efflux pump FieF (300 aa).

The next 4 helical transmembrane spans lie at 12–32, 39–59, 82–102, and 114–134; these read AAIAATVMASLLLLIKIFAWW, ILAALVDSLVDIAASLTNLLV, AALAQSMFISGSALFLFLTGI, and PGVGIVVTLIALVCTIILVTF. 2 residues coordinate Zn(2+): D45 and D49. Zn(2+) is bound by residues H153 and D157. Residues 164 to 184 traverse the membrane as a helical segment; it reads ILVALGLAWYGWHRADALFAL.

Belongs to the cation diffusion facilitator (CDF) transporter (TC 2.A.4) family. FieF subfamily. As to quaternary structure, homodimer.

It is found in the cell inner membrane. The catalysed reaction is Zn(2+)(in) + H(+)(out) = Zn(2+)(out) + H(+)(in). The enzyme catalyses Cd(2+)(in) + H(+)(out) = Cd(2+)(out) + H(+)(in). It catalyses the reaction Fe(2+)(in) + H(+)(out) = Fe(2+)(out) + H(+)(in). Functionally, divalent metal cation transporter which exports Zn(2+), Cd(2+) and possibly Fe(2+). May be involved in zinc and iron detoxification by efflux. This is Cation-efflux pump FieF from Citrobacter koseri (strain ATCC BAA-895 / CDC 4225-83 / SGSC4696).